The sequence spans 1227 residues: Multifunctional 2-oxoglutarate metabolism enzyme (1227 aa).

The segment at 1 to 41 is 2-oxoglutarate dehydrogenase E1, N-terminal part; sequence MSSSPSPFGQNEWLVEEMYRKFRDDPSSVDPSWHEFLVDYS. Positions 23 to 37 are enriched in basic and acidic residues; sequence RDDPSSVDPSWHEFL. Residues 23-102 are disordered; the sequence is RDDPSSVDPS…SATPAKGDES (80 aa). A linker region spans residues 42–88; that stretch reads PEPTTDSASNGRTTTAAPVTPPTPAPAPAPEPKAAPKPAAKTEAKPA. The segment covering 43–53 has biased composition (polar residues); that stretch reads EPTTDSASNGR. Over residues 60–76 the composition is skewed to pro residues; sequence VTPPTPAPAPAPEPKAA. A compositionally biased stretch (low complexity) spans 88–97; it reads AKPAKSATPA. The segment at 89 to 335 is succinyltransferase E2; it reads KPAKSATPAK…LRTIHQLLLD (247 aa). Histidine 314 functions as the Proton acceptor; for succinyltransferase activity in the catalytic mechanism. The tract at residues 336-1227 is 2-oxoglutarate dehydrogenase E1, C-terminal part; it reads DDFFDEIFRE…QQEILDTAFG (892 aa). Arginine 540 serves as a coordination point for thiamine diphosphate. 2-oxoglutarate-binding residues include histidine 579 and serine 604. Thiamine diphosphate-binding residues include serine 604, leucine 606, aspartate 645, alanine 646, alanine 647, and asparagine 678. Aspartate 645 contacts Mg(2+). 2 residues coordinate Mg(2+): asparagine 678 and isoleucine 680. Positions 783–814 form a coiled coil; it reads DISMKEAEDALRDYQGQLERVFNEVRELEKHE. Position 1020 (histidine 1020) interacts with 2-oxoglutarate. Residues threonine 1038, arginine 1054, lysine 1089, serine 1092, glutamine 1142, arginine 1149, and arginine 1150 each contribute to the acetyl-CoA site.

This sequence belongs to the 2-oxoacid dehydrogenase family. Kgd subfamily. As to quaternary structure, homodimer. Interacts with the FHA domain of unphosphorylated GarA. The 2-oxoglutarate dehydrogenase (ODH) complex contains multiple copies of three enzymatic components: 2-oxoglutarate dehydrogenase (E1), dihydrolipoamide succinyltransferase (E2) and lipoamide dehydrogenase (E3). Requires Mg(2+) as cofactor. It depends on thiamine diphosphate as a cofactor.

It carries out the reaction glyoxylate + 2-oxoglutarate + H(+) = 2-hydroxy-3-oxoadipate + CO2. It catalyses the reaction 2-oxoglutarate + H(+) = succinate semialdehyde + CO2. The catalysed reaction is N(6)-[(R)-lipoyl]-L-lysyl-[protein] + 2-oxoglutarate + H(+) = N(6)-[(R)-S(8)-succinyldihydrolipoyl]-L-lysyl-[protein] + CO2. The enzyme catalyses N(6)-[(R)-dihydrolipoyl]-L-lysyl-[protein] + succinyl-CoA = N(6)-[(R)-S(8)-succinyldihydrolipoyl]-L-lysyl-[protein] + CoA. Its pathway is carbohydrate metabolism; tricarboxylic acid cycle; succinate from 2-oxoglutarate (transferase route): step 1/2. It functions in the pathway carbohydrate metabolism; tricarboxylic acid cycle; succinyl-CoA from 2-oxoglutarate (dehydrogenase route): step 1/1. Its activity is regulated as follows. Alpha-ketoglutarate dehydrogenase and decarboxylase activities are inhibited by unphosphorylated GarA, and allosterically activated by acetyl-CoA, the main substrate of the TCA cycle. Both the phosphoadenosine and acetyl moieties of acetyl-CoA are important for activation because neither CoA nor the synthetic compound S-(2-acetamidoethyl)-ethanethioate (which mimics the terminal acetyl-phosphopantetheine group of acetyl-CoA) has an activation effect. In terms of biological role, shows three enzymatic activities that share a first common step, the attack of thiamine-PP on 2-oxoglutarate (alpha-ketoglutarate, KG), leading to the formation of an enamine-thiamine-PP intermediate upon decarboxylation. Thus, displays KGD activity, catalyzing the decarboxylation from five-carbon 2-oxoglutarate to four-carbon succinate semialdehyde (SSA). Also catalyzes C-C bond formation between the activated aldehyde formed after decarboxylation of alpha-ketoglutarate and the carbonyl of glyoxylate (GLX), to yield 2-hydroxy-3-oxoadipate (HOA), which spontaneously decarboxylates to form 5-hydroxylevulinate (HLA). And is also a component of the 2-oxoglutarate dehydrogenase (ODH) complex, that catalyzes the overall conversion of 2-oxoglutarate to succinyl-CoA and CO(2). The KG decarboxylase and KG dehydrogenase reactions provide two alternative, tightly regulated, pathways connecting the oxidative and reductive branches of the TCA cycle. The polypeptide is Multifunctional 2-oxoglutarate metabolism enzyme (kgd) (Mycolicibacterium smegmatis (strain ATCC 700084 / mc(2)155) (Mycobacterium smegmatis)).